We begin with the raw amino-acid sequence, 120 residues long: Large ribosomal subunit protein uL18 (120 aa).

It belongs to the universal ribosomal protein uL18 family. Part of the 50S ribosomal subunit; part of the 5S rRNA/L5/L18/L25 subcomplex. Contacts the 5S and 23S rRNAs.

In terms of biological role, this is one of the proteins that bind and probably mediate the attachment of the 5S RNA into the large ribosomal subunit, where it forms part of the central protuberance. The polypeptide is Large ribosomal subunit protein uL18 (Bacillus cereus (strain AH820)).